Reading from the N-terminus, the 620-residue chain is Chaperone protein HscA homolog (620 aa).

It belongs to the heat shock protein 70 family.

Functionally, chaperone involved in the maturation of iron-sulfur cluster-containing proteins. Has a low intrinsic ATPase activity which is markedly stimulated by HscB. In Pseudomonas savastanoi pv. phaseolicola (strain 1448A / Race 6) (Pseudomonas syringae pv. phaseolicola (strain 1448A / Race 6)), this protein is Chaperone protein HscA homolog.